Reading from the N-terminus, the 166-residue chain is 2-C-methyl-D-erythritol 2,4-cyclodiphosphate synthase (166 aa).

The a divalent metal cation site is built by aspartate 15 and histidine 17. 4-CDP-2-C-methyl-D-erythritol 2-phosphate-binding positions include 15-17 (DIH) and 43-44 (HS). Residue histidine 51 participates in a divalent metal cation binding. 4-CDP-2-C-methyl-D-erythritol 2-phosphate is bound by residues 65 to 67 (DIG), 141 to 144 (TTNE), and arginine 151.

Belongs to the IspF family. In terms of assembly, homotrimer. A divalent metal cation serves as cofactor.

It catalyses the reaction 4-CDP-2-C-methyl-D-erythritol 2-phosphate = 2-C-methyl-D-erythritol 2,4-cyclic diphosphate + CMP. Its pathway is isoprenoid biosynthesis; isopentenyl diphosphate biosynthesis via DXP pathway; isopentenyl diphosphate from 1-deoxy-D-xylulose 5-phosphate: step 4/6. Involved in the biosynthesis of isopentenyl diphosphate (IPP) and dimethylallyl diphosphate (DMAPP), two major building blocks of isoprenoid compounds. Catalyzes the conversion of 4-diphosphocytidyl-2-C-methyl-D-erythritol 2-phosphate (CDP-ME2P) to 2-C-methyl-D-erythritol 2,4-cyclodiphosphate (ME-CPP) with a corresponding release of cytidine 5-monophosphate (CMP). The sequence is that of 2-C-methyl-D-erythritol 2,4-cyclodiphosphate synthase from Prochlorococcus marinus (strain MIT 9215).